The chain runs to 901 residues: HTH-type transcriptional regulator MalT (901 aa).

Residue 39–46 (SPAGYGKT) coordinates ATP. Residues 829-894 (ELIHTSPLTQ…AAVQHAQKLL (66 aa)) form the HTH luxR-type domain. Residues 853–872 (NEQIAGELEVAATTIKTHIR) constitute a DNA-binding region (H-T-H motif).

The protein belongs to the MalT family. Monomer in solution. Oligomerizes to an active state in the presence of the positive effectors ATP and maltotriose.

Its activity is regulated as follows. Activated by ATP and maltotriose, which are both required for DNA binding. Positively regulates the transcription of the maltose regulon whose gene products are responsible for uptake and catabolism of malto-oligosaccharides. Specifically binds to the promoter region of its target genes, recognizing a short DNA motif called the MalT box. This is HTH-type transcriptional regulator MalT from Shigella sonnei (strain Ss046).